The primary structure comprises 273 residues: Cell division protein FtsQ (273 aa).

Over 1–10 (MWNDARTINL) the chain is Cytoplasmic. The chain crosses the membrane as a helical span at residues 11–31 (IANTLAVLAVAAMLLAGVAWV). Residues 32–273 (AQRPYFTLAA…HSKSKPAKKR (242 aa)) are Periplasmic-facing. The 74-residue stretch at 37–110 (FTLAAIEIES…NTLRVRVEEQ (74 aa)) folds into the POTRA domain.

Belongs to the FtsQ/DivIB family. FtsQ subfamily. In terms of assembly, part of a complex composed of FtsB, FtsL and FtsQ.

It is found in the cell inner membrane. In terms of biological role, essential cell division protein. May link together the upstream cell division proteins, which are predominantly cytoplasmic, with the downstream cell division proteins, which are predominantly periplasmic. May control correct divisome assembly. In Bordetella pertussis (strain Tohama I / ATCC BAA-589 / NCTC 13251), this protein is Cell division protein FtsQ.